Here is a 295-residue protein sequence, read N- to C-terminus: Maintenance of mitochondrial morphology protein 1 (295 aa).

Residues 1–12 (MVQLFHLTFTQG) are Lumenal-facing. The chain crosses the membrane as a helical span at residues 13–33 (FFIGQLSVIVIVYIFLRFFLF). The Cytoplasmic segment spans residues 34–295 (CTKEELKNVQ…REGHRQKSTE (262 aa)). Residues 81–278 (EEESLDWFNV…SPQFQQISIP (198 aa)) form the SMP-LTD domain.

Belongs to the MMM1 family. As to quaternary structure, homodimer. Component of the ER-mitochondria encounter structure (ERMES) or MDM complex, composed of mmm1, mdm10, mdm12 and mdm34. A mmm1 homodimer associates with one molecule of mdm12 on each side in a pairwise head-to-tail manner, and the SMP-LTD domains of mmm1 and mdm12 generate a continuous hydrophobic tunnel for phospholipid trafficking.

Its subcellular location is the endoplasmic reticulum membrane. Its function is as follows. Component of the ERMES/MDM complex, which serves as a molecular tether to connect the endoplasmic reticulum (ER) and mitochondria. Components of this complex are involved in the control of mitochondrial shape and protein biogenesis, and function in nonvesicular lipid trafficking between the ER and mitochondria. The mdm12-mmm1 subcomplex functions in the major beta-barrel assembly pathway that is responsible for biogenesis of all outer membrane beta-barrel proteins, and acts in a late step after the SAM complex. The mdm10-mdm12-mmm1 subcomplex further acts in the TOM40-specific pathway after the action of the mdm12-mmm1 complex. Essential for establishing and maintaining the structure of mitochondria and maintenance of mtDNA nucleoids. The protein is Maintenance of mitochondrial morphology protein 1 of Schizosaccharomyces japonicus (strain yFS275 / FY16936) (Fission yeast).